The sequence spans 279 residues: Probable flavonol synthase 4 (279 aa).

The interval 1–25 (MEVERDQHKPPLSLQNNKIPSSQNF) is disordered. The span at 13-25 (SLQNNKIPSSQNF) shows a compositional bias: polar residues. A Fe2OG dioxygenase domain is found at 156-256 (GAGYLMKINY…RMSSVVHIKP (101 aa)). 164 to 166 (NYY) is a binding site for 2-oxoglutarate. Fe cation-binding residues include histidine 181, aspartate 183, and histidine 237. 247-249 (RMS) contacts 2-oxoglutarate.

The protein belongs to the iron/ascorbate-dependent oxidoreductase family. The cofactor is Fe(2+).

It catalyses the reaction a (2R,3R)-dihydroflavonol + 2-oxoglutarate + O2 = a flavonol + succinate + CO2 + H2O. Its pathway is secondary metabolite biosynthesis; flavonoid biosynthesis. This chain is Probable flavonol synthase 4 (FLS4), found in Arabidopsis thaliana (Mouse-ear cress).